The sequence spans 573 residues: E3 ubiquitin-protein ligase TRIM23 (573 aa).

The RING-type; degenerate zinc-finger motif lies at 31 to 76; that stretch reads CGVCEDVFSLQGDKVPRLLLCGHTVCHDCLTRLPLHGRAIRCPFDR. The B box-type; degenerate zinc finger occupies 122–168; sequence ESIIRCDEDEAHVASVYCTVCATHLCSECSQVTHSTKTLAKHRRVPL. Residues 351 to 378 are a coiled coil; the sequence is RVVLAKQEITRLLETLQKQQQQFTEVAD. The ARF-like stretch occupies residues 390-573; sequence FTKDNRVYHG…LVAAGVLDVA (184 aa). GTP contacts are provided by residues 411–418, 454–458, and 513–516; these read LDGAGKTT, VGGKH, and KQDV.

In the C-terminal section; belongs to the small GTPase superfamily. Arf family. In terms of assembly, homodimer. Interacts with PSCD1. Interacts with UBE2D2. Interacts with TBK1 (via N-terminal kinase domain) and p62/SQSTM1.

It localises to the cytoplasm. It is found in the endomembrane system. The protein resides in the golgi apparatus membrane. Its subcellular location is the lysosome membrane. It carries out the reaction S-ubiquitinyl-[E2 ubiquitin-conjugating enzyme]-L-cysteine + [acceptor protein]-L-lysine = [E2 ubiquitin-conjugating enzyme]-L-cysteine + N(6)-ubiquitinyl-[acceptor protein]-L-lysine.. The protein operates within protein modification; protein ubiquitination. Its function is as follows. Acts as an E3 ubiquitin-protein ligase. Plays an essential role in autophagy activation during viral infection. Mechanistically, activates TANK-binding kinase 1/TBK1 by facilitating its dimerization and ability to phosphorylate the selective autophagy receptor SQSTM1. In order to achieve this function, TRIM23 mediates 'Lys-27'-linked auto-ubiquitination of its ADP-ribosylation factor (ARF) domain to induce its GTPase activity and its recruitment to autophagosomes. This chain is E3 ubiquitin-protein ligase TRIM23 (Trim23), found in Rattus norvegicus (Rat).